The following is a 599-amino-acid chain: Sulfite reductase [NADPH] flavoprotein alpha-component (599 aa).

One can recognise a Flavodoxin-like domain in the interval 64–202; sequence ITIISASQTG…AASEWRARVV (139 aa). FMN-binding positions include 70–75, 117–120, and 153–162; these read SQTGNA, STQG, and LGDSSYEFFC. Residues 234–448 form the FAD-binding FR-type domain; sequence DAPLVASLSV…IEHNDNFRLP (215 aa). Residues T322, A356, 386-389, 404-406, Y410, and 419-422 contribute to the FAD site; these read RLYS, TVG, and GGAS. NADP(+) is bound by residues 519-520, 525-529, and D561; these read SR and KVYVQ. Y599 is an FAD binding site.

It belongs to the NADPH-dependent sulphite reductase flavoprotein subunit CysJ family. In the N-terminal section; belongs to the flavodoxin family. The protein in the C-terminal section; belongs to the flavoprotein pyridine nucleotide cytochrome reductase family. In terms of assembly, alpha(8)-beta(8). The alpha component is a flavoprotein, the beta component is a hemoprotein. FAD serves as cofactor. It depends on FMN as a cofactor.

It carries out the reaction hydrogen sulfide + 3 NADP(+) + 3 H2O = sulfite + 3 NADPH + 4 H(+). It participates in sulfur metabolism; hydrogen sulfide biosynthesis; hydrogen sulfide from sulfite (NADPH route): step 1/1. Functionally, component of the sulfite reductase complex that catalyzes the 6-electron reduction of sulfite to sulfide. This is one of several activities required for the biosynthesis of L-cysteine from sulfate. The flavoprotein component catalyzes the electron flow from NADPH -&gt; FAD -&gt; FMN to the hemoprotein component. The sequence is that of Sulfite reductase [NADPH] flavoprotein alpha-component from Escherichia coli O157:H7.